Consider the following 562-residue polypeptide: Arginine--tRNA ligase 1 (562 aa).

Residues 122–132 (PNIAKPFSMGH) carry the 'HIGH' region motif.

The protein belongs to the class-I aminoacyl-tRNA synthetase family. In terms of assembly, monomer.

The protein resides in the cytoplasm. It catalyses the reaction tRNA(Arg) + L-arginine + ATP = L-arginyl-tRNA(Arg) + AMP + diphosphate. This chain is Arginine--tRNA ligase 1, found in Bacillus thuringiensis subsp. konkukian (strain 97-27).